The primary structure comprises 218 residues: Protein N-lysine methyltransferase METTL21A (218 aa).

Residues W47, 73-75 (GAG), D94, W125, and A143 contribute to the S-adenosyl-L-methionine site.

This sequence belongs to the methyltransferase superfamily. METTL21 family. Interacts with heat shock protein 70 family members; at least some of these proteins are methylation substrates.

The protein localises to the cytoplasm. It catalyses the reaction L-lysyl-[protein] + 3 S-adenosyl-L-methionine = N(6),N(6),N(6)-trimethyl-L-lysyl-[protein] + 3 S-adenosyl-L-homocysteine + 3 H(+). Protein-lysine methyltransferase that selectively trimethylates residues in heat shock protein 70 (HSP70) family members. Contributes to the in vivo trimethylation of Lys residues in HSPA1 and HSPA8. In vitro methylates 'Lys-561' in HSPA1, 'Lys-564' in HSPA2, 'Lys-585' in HSPA5, 'Lys-563' in HSPA6 and 'Lys-561' in HSPA8. The sequence is that of Protein N-lysine methyltransferase METTL21A (METTL21A) from Homo sapiens (Human).